A 570-amino-acid chain; its full sequence is Sulfite reductase [NADPH] hemoprotein beta-component (570 aa).

Cys-434, Cys-440, Cys-479, and Cys-483 together coordinate [4Fe-4S] cluster. A siroheme-binding site is contributed by Cys-483.

This sequence belongs to the nitrite and sulfite reductase 4Fe-4S domain family. Alpha(8)-beta(8). The alpha component is a flavoprotein, the beta component is a hemoprotein. Requires siroheme as cofactor. It depends on [4Fe-4S] cluster as a cofactor.

It catalyses the reaction hydrogen sulfide + 3 NADP(+) + 3 H2O = sulfite + 3 NADPH + 4 H(+). The protein operates within sulfur metabolism; hydrogen sulfide biosynthesis; hydrogen sulfide from sulfite (NADPH route): step 1/1. Component of the sulfite reductase complex that catalyzes the 6-electron reduction of sulfite to sulfide. This is one of several activities required for the biosynthesis of L-cysteine from sulfate. This Escherichia coli O1:K1 / APEC protein is Sulfite reductase [NADPH] hemoprotein beta-component.